Reading from the N-terminus, the 471-residue chain is Vanillate/3-O-methylgallate O-demethylase (471 aa).

Residue Tyr31 participates in substrate binding. Gln57 is a binding site for (6S)-5,6,7,8-tetrahydrofolate. His60 is a substrate binding site. Positions 93 and 120 each coordinate (6S)-5,6,7,8-tetrahydrofolate. Arg122 lines the substrate pocket. The (6S)-5,6,7,8-tetrahydrofolate site is built by Gln165 and Glu215. 247 to 250 (YPSN) lines the substrate pocket. Trp256 serves as a coordination point for (6S)-5,6,7,8-tetrahydrofolate.

Belongs to the GcvT family. As to quaternary structure, homodimer.

The catalysed reaction is vanillate + (6S)-5,6,7,8-tetrahydrofolate = (6S)-5-methyl-5,6,7,8-tetrahydrofolate + 3,4-dihydroxybenzoate. It catalyses the reaction 3-O-methylgallate + (6S)-5,6,7,8-tetrahydrofolate = 3,4,5-trihydroxybenzoate + (6S)-5-methyl-5,6,7,8-tetrahydrofolate. It participates in secondary metabolite metabolism; lignin degradation. Involved in the catabolism of vanillate and syringate. Catalyzes the transfer of a methyl moiety from vanillate or 3-O-methylgallate (3MGA) to tetrahydrofolate, forming protocatechuate (PCA) or gallate, respectively, and methyl-tetrahydrofolate. Has similar activities with both substrates. Cannot use syringate. Uses an ordered, sequential kinetic mechanism. In Sphingobium sp. (strain NBRC 103272 / SYK-6), this protein is Vanillate/3-O-methylgallate O-demethylase.